A 312-amino-acid polypeptide reads, in one-letter code: Glycerol-3-phosphate dehydrogenase [NAD(P)+] (312 aa).

Trp11, Arg30, Arg31, and Lys95 together coordinate NADPH. Residues Lys95, Gly123, and Ser125 each coordinate sn-glycerol 3-phosphate. Ala127 contributes to the NADPH binding site. Residues Lys177, Asp230, Ser240, Arg241, and Asn242 each coordinate sn-glycerol 3-phosphate. Catalysis depends on Lys177, which acts as the Proton acceptor. An NADPH-binding site is contributed by Arg241. Val265 and Glu267 together coordinate NADPH.

The protein belongs to the NAD-dependent glycerol-3-phosphate dehydrogenase family.

The protein localises to the cytoplasm. It catalyses the reaction sn-glycerol 3-phosphate + NAD(+) = dihydroxyacetone phosphate + NADH + H(+). It carries out the reaction sn-glycerol 3-phosphate + NADP(+) = dihydroxyacetone phosphate + NADPH + H(+). The protein operates within membrane lipid metabolism; glycerophospholipid metabolism. Its function is as follows. Catalyzes the reduction of the glycolytic intermediate dihydroxyacetone phosphate (DHAP) to sn-glycerol 3-phosphate (G3P), the key precursor for phospholipid synthesis. This is Glycerol-3-phosphate dehydrogenase [NAD(P)+] from Helicobacter pylori (strain Shi470).